Reading from the N-terminus, the 194-residue chain is Large ribosomal subunit protein uL22 (194 aa).

The protein belongs to the universal ribosomal protein uL22 family.

This chain is Large ribosomal subunit protein uL22 (rpl17), found in Aspergillus fumigatus (strain ATCC MYA-4609 / CBS 101355 / FGSC A1100 / Af293) (Neosartorya fumigata).